The sequence spans 113 residues: Molt-inhibiting hormone (113 aa).

The signal sequence occupies residues 1-35 (MMSRTESRYSSQRTWLLSMVVLAALWSISVQRATA). 3 disulfides stabilise this stretch: cysteine 42–cysteine 79, cysteine 59–cysteine 75, and cysteine 62–cysteine 88.

The protein belongs to the arthropod CHH/MIH/GIH/VIH hormone family.

It localises to the secreted. In terms of biological role, inhibits Y-organs where molting hormone (ecdysteroid) is secreted. A molting cycle is initiated when MIH secretion diminishes or stops. In Metacarcinus magister (Dungeness crab), this protein is Molt-inhibiting hormone.